The primary structure comprises 111 residues: Nucleoid-associated protein NMA1657 (111 aa).

It belongs to the YbaB/EbfC family. Homodimer.

The protein resides in the cytoplasm. It localises to the nucleoid. Binds to DNA and alters its conformation. May be involved in regulation of gene expression, nucleoid organization and DNA protection. This chain is Nucleoid-associated protein NMA1657, found in Neisseria meningitidis serogroup A / serotype 4A (strain DSM 15465 / Z2491).